Consider the following 285-residue polypeptide: MRMIIVSGRSGSGKSTALDVLEDNGFYCVDNLPAGLLPELAERALINTELAEPLLAVSIDARNLPSHLTRFPQMLDEVRSRNIQCDVLYLDADEATLLKRFSETRRRHPLSTADRSLAEAIRDETTLLGPIIDLADLKINTTHLNLYQLRDALKLRLLNKPEPGTAFLIESFGFKRGMPVDADLVFDVRCLPNPYWKPELRDHSGLEQPVIDYLSAQADVEEMFQDIFSYLNKWLPRFAASNRSYVTIAIGCTGGHHRSVYLTERLGQVLQQSLKNVQVRHRDLS.

ATP is bound at residue 8 to 15; sequence GRSGSGKS. GTP is bound at residue 60-63; it reads DARN.

It belongs to the RapZ-like family.

Displays ATPase and GTPase activities. The protein is Nucleotide-binding protein PSPTO_4456 of Pseudomonas syringae pv. tomato (strain ATCC BAA-871 / DC3000).